A 373-amino-acid polypeptide reads, in one-letter code: tRNA-specific 2-thiouridylase MnmA (373 aa).

Residues 12 to 19 (GMSGGVDS) and methionine 38 contribute to the ATP site. Residues 98 to 100 (NPD) form an interaction with target base in tRNA region. The Nucleophile role is filled by cysteine 103. Cysteine 103 and cysteine 200 form a disulfide bridge. Position 127 (glycine 127) interacts with ATP. An interaction with tRNA region spans residues 150–152 (KDQ). Cysteine 200 functions as the Cysteine persulfide intermediate in the catalytic mechanism. Positions 312-313 (RY) are interaction with tRNA.

The protein belongs to the MnmA/TRMU family.

The protein resides in the cytoplasm. The enzyme catalyses S-sulfanyl-L-cysteinyl-[protein] + uridine(34) in tRNA + AH2 + ATP = 2-thiouridine(34) in tRNA + L-cysteinyl-[protein] + A + AMP + diphosphate + H(+). Functionally, catalyzes the 2-thiolation of uridine at the wobble position (U34) of tRNA, leading to the formation of s(2)U34. The sequence is that of tRNA-specific 2-thiouridylase MnmA from Streptococcus pneumoniae (strain 70585).